The chain runs to 785 residues: Potassium transporter 5 (785 aa).

Residues Met1–Ser60 are Cytoplasmic-facing. The residue at position 35 (Ser35) is a Phosphoserine. The helical transmembrane segment at Leu61–Tyr81 threads the bilayer. The Extracellular segment spans residues Ala82–Gly97. A helical membrane pass occupies residues Val98 to Val118. The Cytoplasmic portion of the chain corresponds to Leu119–Lys184. Residues Ile185–Thr205 form a helical membrane-spanning segment. Residues Pro206–Lys218 lie on the Extracellular side of the membrane. A helical transmembrane segment spans residues Ser219 to Phe239. Residues Gln240–Val247 lie on the Cytoplasmic side of the membrane. The chain crosses the membrane as a helical span at residues Gly248 to Phe268. Topologically, residues Asn269–Gly297 are extracellular. The helical transmembrane segment at Trp298 to Leu318 threads the bilayer. Residues Gly319 to Gln327 are Cytoplasmic-facing. A helical transmembrane segment spans residues Ile328–Tyr348. Residues Leu349 to Pro367 are Extracellular-facing. A glycan (N-linked (GlcNAc...) asparagine) is linked at Asn355. A helical transmembrane segment spans residues Leu368–Ile388. Over Ser389–Gln419 the chain is Cytoplasmic. Residues Val420–Phe440 form a helical membrane-spanning segment. Over Arg441–Gly451 the chain is Extracellular. Residues Ile452–Ile472 traverse the membrane as a helical segment. Over Trp473–Asn476 the chain is Cytoplasmic. The helical transmembrane segment at Ile477–Ser497 threads the bilayer. Residues Val498–Lys501 lie on the Extracellular side of the membrane. Residues Phe502–Ile522 traverse the membrane as a helical segment. Residues Trp523–Leu785 are Cytoplasmic-facing. The disordered stretch occupies residues Gly660–Ser699. Residues Glu662–Asn673 are compositionally biased toward acidic residues. Polar residues predominate over residues Ala674–Pro686. The segment covering Ser687 to Ser697 has biased composition (low complexity).

Belongs to the HAK/KUP transporter (TC 2.A.72.3) family. As to quaternary structure, interacts with ILK1. In terms of processing, phosphorylated at the N-terminus (amino acids 1-95) by CIPK23. In terms of tissue distribution, predominantly expressed in the roots.

The protein resides in the cell membrane. Functionally, high-affinity potassium transporter. Can also transport rubidium and cesium. Is essential with AKT1 for high-affinity potassium uptake in roots during seedling establishment and postgermination growth under low potassium conditions. Mediates potassium uptake by plant roots in response to low potassium conditions, by a calcium-, CBL-, and CIPK-dependent pathway. Positively regulated by the calcium sensors calcineurin B-like genes CBL1, CBL8, CBL9 and CBL10, and by phosphorylation by CIPK23. The polypeptide is Potassium transporter 5 (POT5) (Arabidopsis thaliana (Mouse-ear cress)).